The chain runs to 565 residues: MNVHKMKILSLLMVSFISWQARAESVCPEWSEERMSGEMHLLEKQLDQWNIAYHQQGISPIADDIYDQLQDKLHRWRLCLGLPDKTDNRPIPGNGKMLHPVAHTGLKKLKDEAALISWMTGRKNLWVQPKIDGVAVTLVYQAGKLTQVLSRGNGLKGQNWADKAPFISAIPQYIASAPPLLTLQGEVFLQMEGHQQAQSGGANARASVAGALMRKSVSPLLAKLGIFIWAWPDGPKSMVEKSRLLQEMGFPLTAHYSEPVISSSDVALWRDRWFKMPLPFVTDGVVIRQENVPAGRYWQATPGNWSVAWKYPPPQQITEIKDIHFTVGRTGKITAILQVIPVKIDDKWIRRVNIGSIARWKQWDIVPGDQVTISLAGQGIPRLDKVIWRVSQRQEIVPPDADKFHQLTCFRRLPFECEPQFLSRLAWLSGTNGLDMQSVGNGLWRELIHHGFINGLLDWLSLSVEQIAAVPGIGQGRAEKIYQQFQRARQQPFSQWLQALGFPQGIPLDTSWHSLRQRSIAEWRLMPGIGQVRAKQINHFLHHPEVQMMADFLSQQGIAGFSPEE.

K130 functions as the N6-AMP-lysine intermediate in the catalytic mechanism.

The protein belongs to the NAD-dependent DNA ligase family. LigB subfamily.

The catalysed reaction is NAD(+) + (deoxyribonucleotide)n-3'-hydroxyl + 5'-phospho-(deoxyribonucleotide)m = (deoxyribonucleotide)n+m + AMP + beta-nicotinamide D-nucleotide.. Its function is as follows. Catalyzes the formation of phosphodiester linkages between 5'-phosphoryl and 3'-hydroxyl groups in double-stranded DNA using NAD as a coenzyme and as the energy source for the reaction. The sequence is that of DNA ligase B from Yersinia enterocolitica serotype O:8 / biotype 1B (strain NCTC 13174 / 8081).